A 55-amino-acid polypeptide reads, in one-letter code: Large ribosomal subunit protein bL33B (55 aa).

The protein belongs to the bacterial ribosomal protein bL33 family.

The polypeptide is Large ribosomal subunit protein bL33B (rpmG2) (Mycobacterium tuberculosis (strain CDC 1551 / Oshkosh)).